The sequence spans 132 residues: Fatty acid-binding protein 9 (132 aa).

Phosphoserine occurs at positions 13, 14, 44, and 91.

The protein belongs to the calycin superfamily. Fatty-acid binding protein (FABP) family.

It is found in the cytoplasm. The sequence is that of Fatty acid-binding protein 9 (FABP9) from Homo sapiens (Human).